The chain runs to 62 residues: Protein DsrB (62 aa).

The protein belongs to the DsrB family.

The sequence is that of Protein DsrB from Citrobacter koseri (strain ATCC BAA-895 / CDC 4225-83 / SGSC4696).